The sequence spans 1328 residues: 5'-3' exoribonuclease 1 (1328 aa).

The disordered stretch occupies residues 1211–1328 (AGKNRKTNVS…VQPMGKLQIN (118 aa)). The segment covering 1217–1231 (TNVSANNVSQGTDSR) has biased composition (polar residues). Basic residues predominate over residues 1275-1286 (HKSKSKFSKGNH).

The protein belongs to the 5'-3' exonuclease family. As to quaternary structure, monomer. It depends on Mg(2+) as a cofactor.

The protein resides in the cytoplasm. The protein localises to the perinuclear region. Its subcellular location is the P-body. Strand exchange activity is enhanced by fatty acid synthase (stimulatory factor P190/210). Functionally, multifunctional protein that exhibits several independent functions at different levels of the cellular processes. 5'-3' exonuclease component of the nonsense-mediated mRNA decay (NMD) which is a highly conserved mRNA degradation pathway, an RNA surveillance system whose role is to identify and rid cells of mRNA with premature termination codons and thus prevents accumulation of potentially harmful truncated proteins. Involved in the degradation of several hypomodified mature tRNA species and participates in the 5'-processing or the degradation of the snoRNA precursors and rRNA processing. The protein is 5'-3' exoribonuclease 1 (exo2) of Schizosaccharomyces pombe (strain 972 / ATCC 24843) (Fission yeast).